The primary structure comprises 391 residues: Cell cycle checkpoint control protein RAD9A (391 aa).

A Phosphotyrosine modification is found at Tyr-28. The interval Phe-51 to Glu-91 is possesses 3'-5' exonuclease activity. The tract at residues Ser-266–Gly-391 is sufficient for interaction with ABL1. Basic and acidic residues predominate over residues Thr-268–Gln-282. Disordered stretches follow at residues Thr-268–Asp-301 and Ser-319–Gly-391. 3 positions are modified to phosphoserine: Ser-272, Ser-277, and Ser-328. Ser-341 is modified (phosphoserine; by CK2). 2 positions are modified to phosphoserine: Ser-375 and Ser-380. Phosphoserine; by CK2 is present on Ser-387.

Belongs to the rad9 family. In terms of assembly, component of the toroidal 9-1-1 (RAD9-RAD1-HUS1) complex, composed of RAD9A, RAD1 and HUS1. The 9-1-1 complex associates with LIG1, POLB, FEN1, RAD17, HDAC1, RPA1 and RPA2. The 9-1-1 complex associates with the RAD17-RFC complex. RAD9A interacts with BCL2L1, FEN1, RAD9B, ABL1, RPA1, ATAD5 and RPA2. Interacts with DNAJC7. Interacts (when phosphorylated) with TOPBP1. Post-translationally, constitutively phosphorylated on serine and threonine amino acids in absence of DNA damage. Hyperphosphorylated by PRKCD and ABL1 upon DNA damage. Its phosphorylation by PRKCD may be required for the formation of the 9-1-1 complex. Phosphorylated at Ser-341 and Ser-387 by CK2, promoting interaction with TOPBP1.

It localises to the nucleus. The catalysed reaction is Exonucleolytic cleavage in the 3'- to 5'-direction to yield nucleoside 5'-phosphates.. Its function is as follows. Component of the 9-1-1 cell-cycle checkpoint response complex that plays a major role in DNA repair. The 9-1-1 complex is recruited to DNA lesion upon damage by the RAD17-replication factor C (RFC) clamp loader complex. Acts then as a sliding clamp platform on DNA for several proteins involved in long-patch base excision repair (LP-BER). The 9-1-1 complex stimulates DNA polymerase beta (POLB) activity by increasing its affinity for the 3'-OH end of the primer-template and stabilizes POLB to those sites where LP-BER proceeds; endonuclease FEN1 cleavage activity on substrates with double, nick, or gap flaps of distinct sequences and lengths; and DNA ligase I (LIG1) on long-patch base excision repair substrates. The 9-1-1 complex is necessary for the recruitment of RHNO1 to sites of double-stranded breaks (DSB) occurring during the S phase. RAD9A possesses 3'-&gt;5' double stranded DNA exonuclease activity. This Homo sapiens (Human) protein is Cell cycle checkpoint control protein RAD9A (RAD9A).